The primary structure comprises 344 residues: Ribosomal RNA large subunit methyltransferase Cfr (344 aa).

Glu-90 acts as the Proton acceptor in catalysis. Residues 97-330 (KQGWESFCIS…ATVRTQFGSE (234 aa)) form the Radical SAM core domain. The cysteines at positions 104 and 335 are disulfide-linked. [4Fe-4S] cluster is bound by residues Cys-111, Cys-115, and Cys-118. S-adenosyl-L-methionine contacts are provided by residues 157 to 158 (GE), Ser-188, 211 to 213 (SLH), and Asn-292. Catalysis depends on Cys-335, which acts as the S-methylcysteine intermediate.

Belongs to the radical SAM superfamily. RlmN family. Cfr subfamily. The cofactor is [4Fe-4S] cluster.

It localises to the cytoplasm. The enzyme catalyses adenosine(2503) in 23S rRNA + 2 reduced [2Fe-2S]-[ferredoxin] + 2 S-adenosyl-L-methionine = 8-methyladenosine(2503) in 23S rRNA + 5'-deoxyadenosine + L-methionine + 2 oxidized [2Fe-2S]-[ferredoxin] + S-adenosyl-L-homocysteine. Its function is as follows. Specifically methylates position 8 of adenine 2503 in 23S rRNA. Confers resistance to some classes of antibiotics. The protein is Ribosomal RNA large subunit methyltransferase Cfr of Clostridium botulinum (strain Loch Maree / Type A3).